Consider the following 675-residue polypeptide: UvrABC system protein B (675 aa).

Positions Ser30–Arg417 constitute a Helicase ATP-binding domain. Residue Gly43–Thr50 participates in ATP binding. Positions Tyr96–Ile119 match the Beta-hairpin motif. One can recognise a Helicase C-terminal domain in the interval Gln434 to Asp601. The region spanning Ala637–Gln672 is the UVR domain.

The protein belongs to the UvrB family. Forms a heterotetramer with UvrA during the search for lesions. Interacts with UvrC in an incision complex.

It localises to the cytoplasm. Its function is as follows. The UvrABC repair system catalyzes the recognition and processing of DNA lesions. A damage recognition complex composed of 2 UvrA and 2 UvrB subunits scans DNA for abnormalities. Upon binding of the UvrA(2)B(2) complex to a putative damaged site, the DNA wraps around one UvrB monomer. DNA wrap is dependent on ATP binding by UvrB and probably causes local melting of the DNA helix, facilitating insertion of UvrB beta-hairpin between the DNA strands. Then UvrB probes one DNA strand for the presence of a lesion. If a lesion is found the UvrA subunits dissociate and the UvrB-DNA preincision complex is formed. This complex is subsequently bound by UvrC and the second UvrB is released. If no lesion is found, the DNA wraps around the other UvrB subunit that will check the other stand for damage. This is UvrABC system protein B from Acinetobacter baylyi (strain ATCC 33305 / BD413 / ADP1).